A 235-amino-acid chain; its full sequence is Cytidylate kinase (235 aa).

An ATP-binding site is contributed by 16-24; that stretch reads GPAASGKST.

Belongs to the cytidylate kinase family. Type 1 subfamily.

The protein localises to the cytoplasm. The enzyme catalyses CMP + ATP = CDP + ADP. The catalysed reaction is dCMP + ATP = dCDP + ADP. This chain is Cytidylate kinase, found in Chlorobaculum tepidum (strain ATCC 49652 / DSM 12025 / NBRC 103806 / TLS) (Chlorobium tepidum).